A 270-amino-acid polypeptide reads, in one-letter code: 5'-AMP-activated protein kinase subunit beta-1 (270 aa).

A disordered region spans residues 1 to 43; sequence MGNTSSERAALERQAGHKTPRRDSSGGTKDGDRPKILMDSPED. Residue Gly-2 is the site of N-myristoyl glycine attachment. Phosphothreonine is present on Thr-4. Residues Ser-5 and Ser-6 each carry the phosphoserine modification. Positions 9–36 are enriched in basic and acidic residues; the sequence is AALERQAGHKTPRRDSSGGTKDGDRPKI. The residue at position 19 (Thr-19) is a Phosphothreonine. Residues Ser-24 and Ser-25 each carry the phosphoserine; by autocatalysis modification. Ser-40, Ser-96, and Ser-101 each carry phosphoserine. The tract at residues 68–163 is glycogen-binding domain; the sequence is EVNEKAPAQA…QVKKTDFEVF (96 aa). Position 108 is a phosphoserine; by autocatalysis (Ser-108). A Phosphothreonine modification is found at Thr-148. Ser-182 bears the Phosphoserine mark. Lys-201 carries the N6-succinyllysine modification.

This sequence belongs to the 5'-AMP-activated protein kinase beta subunit family. As to quaternary structure, AMPK is a heterotrimer of an alpha catalytic subunit (PRKAA1 or PRKAA2), a beta (PRKAB1 or PRKAB2) and a gamma non-catalytic subunits (PRKAG1, PRKAG2 or PRKAG3). Interacts with FNIP1 and FNIP2. Phosphorylated when associated with the catalytic subunit (PRKAA1 or PRKAA2). Phosphorylated by ULK1; leading to negatively regulate AMPK activity and suggesting the existence of a regulatory feedback loop between ULK1 and AMPK. As to expression, highly expressed in kidney, heart, white adipose tissue, lung and spleen.

Non-catalytic subunit of AMP-activated protein kinase (AMPK), an energy sensor protein kinase that plays a key role in regulating cellular energy metabolism. In response to reduction of intracellular ATP levels, AMPK activates energy-producing pathways and inhibits energy-consuming processes: inhibits protein, carbohydrate and lipid biosynthesis, as well as cell growth and proliferation. AMPK acts via direct phosphorylation of metabolic enzymes, and by longer-term effects via phosphorylation of transcription regulators. Also acts as a regulator of cellular polarity by remodeling the actin cytoskeleton; probably by indirectly activating myosin. Beta non-catalytic subunit acts as a scaffold on which the AMPK complex assembles, via its C-terminus that bridges alpha (PRKAA1 or PRKAA2) and gamma subunits (PRKAG1, PRKAG2 or PRKAG3). This is 5'-AMP-activated protein kinase subunit beta-1 (Prkab1) from Rattus norvegicus (Rat).